A 410-amino-acid chain; its full sequence is Trans-splicing factor Raa2, chloroplastic (410 aa).

2 disordered regions span residues 1 to 40 and 56 to 106; these read MRTRAGAFFGKQRSTSPSGSSTSASRQWLRSSPGRTQRPA and AADH…QQQV. A chloroplast-targeting transit peptide spans 1 to 46; sequence MRTRAGAFFGKQRSTSPSGSSTSASRQWLRSSPGRTQRPAAHRVLA. The span at 14–25 shows a compositional bias: low complexity; it reads STSPSGSSTSAS. Over residues 26–35 the composition is skewed to polar residues; it reads RQWLRSSPGR. Over residues 96 to 106 the composition is skewed to low complexity; sequence RQAQRRQQQQV.

It belongs to the pseudouridine synthase TruB family. Possibly associated with other factors required for trans-splicing.

Its subcellular location is the plastid. It is found in the chloroplast. Functionally, required for trans-splicing of exons 2 and 3 of the chloroplast encoded psaA mRNA (a group II intron). It is not known if this protein has pseudouridine activity; mutation of the potential active site residue does not cause loss of trans-splicing. In Chlamydomonas reinhardtii (Chlamydomonas smithii), this protein is Trans-splicing factor Raa2, chloroplastic (RAA2).